The sequence spans 389 residues: Chalcone synthase 1 (389 aa).

Cys163 is a catalytic residue.

The protein belongs to the thiolase-like superfamily. Chalcone/stilbene synthases family.

It carries out the reaction (E)-4-coumaroyl-CoA + 3 malonyl-CoA + 3 H(+) = 2',4,4',6'-tetrahydroxychalcone + 3 CO2 + 4 CoA. The protein operates within secondary metabolite biosynthesis; flavonoid biosynthesis. Functionally, the primary product of this enzyme is 4,2',4',6'-tetrahydroxychalcone (also termed naringenin-chalcone or chalcone) which can under specific conditions spontaneously isomerize into naringenin. The protein is Chalcone synthase 1 (CHS1) of Citrus sinensis (Sweet orange).